A 684-amino-acid chain; its full sequence is TBC1 domain family member 23 (684 aa).

Positions 44 to 225 constitute a Rab-GAP TBC domain; that stretch reads PLPAELRAKV…AIWDGYLQQA (182 aa). At S300 the chain carries Phosphoserine. The 113-residue stretch at 334–446 folds into the Rhodanese domain; that stretch reads EGVRFFVVDC…LQQHLADINV (113 aa). S469, S474, and S507 each carry phosphoserine. Phosphothreonine is present on T514. Positions 514–558 are may mediate the interaction with C17orf75, FAM91A1 and WDR11; it reads TPVDRHVSSSDRVGKPYRGVKPVFSIGDEEEYDTDEIDSSSMSDD. Positions 514–684 are may mediate the interaction with WASHC1; the sequence is TPVDRHVSSS…IMKVLDALES (171 aa). The residue at position 556 (S556) is a Phosphoserine. The tract at residues 559–684 is may mediate the interaction with FKBP15 and WASHC2; required for endosome to Golgi trafficking; it reads DRKEVVNIQT…IMKVLDALES (126 aa).

Directly interacts with GOLGA1 and GOLGA4. Interacts with FAM91A1, C17ORF75 and WDR11; the interaction recruits TBC1D23 to AP-1-derived vesicles. Directly interacts with WASHC1 and WASHC2/FAM21. Interacts with FKBP15.

It is found in the golgi apparatus. The protein localises to the trans-Golgi network. The protein resides in the cytoplasmic vesicle. Functionally, putative Rab GTPase-activating protein which plays a role in vesicular trafficking. Involved in endosome-to-Golgi trafficking. Acts as a bridging protein by binding simultaneously to golgins, including GOLGA1 and GOLGA4, located at the trans-Golgi, and to the WASH complex, located on endosome-derived vesicles. Together with WDR11 complex facilitates the golgin-mediated capture of vesicles generated using AP-1. Plays a role in brain development, including in cortical neuron positioning. May also be important for neurite outgrowth, possibly through its involvement in membrane trafficking and cargo delivery, 2 processes which are essential for axonal and dendritic growth. May act as a general inhibitor of innate immunity signaling, strongly inhibiting multiple TLR and dectin/CLEC7A-signaling pathways. Does not alter initial activation events, but instead affects maintenance of inflammatory gene expression several hours after bacterial lipopolysaccharide (LPS) challenge. The protein is TBC1 domain family member 23 (Tbc1d23) of Mus musculus (Mouse).